A 485-amino-acid chain; its full sequence is Glutamate--tRNA ligase (485 aa).

A 'HIGH' region motif is present at residues 11–21 (PSPTGYMHVGN). Zn(2+) contacts are provided by Cys-108, Cys-110, Cys-135, and Asp-137. The 'KMSKS' region signature appears at 252–256 (KLSKR). Lys-255 provides a ligand contact to ATP.

This sequence belongs to the class-I aminoacyl-tRNA synthetase family. Glutamate--tRNA ligase type 1 subfamily. In terms of assembly, monomer. The cofactor is Zn(2+).

It localises to the cytoplasm. It catalyses the reaction tRNA(Glu) + L-glutamate + ATP = L-glutamyl-tRNA(Glu) + AMP + diphosphate. In terms of biological role, catalyzes the attachment of glutamate to tRNA(Glu) in a two-step reaction: glutamate is first activated by ATP to form Glu-AMP and then transferred to the acceptor end of tRNA(Glu). In Clostridium botulinum (strain Loch Maree / Type A3), this protein is Glutamate--tRNA ligase.